We begin with the raw amino-acid sequence, 129 residues long: V-type proton ATPase subunit F 2 (129 aa).

The protein belongs to the V-ATPase F subunit family. V-ATPase is a heteromultimeric enzyme made up of two complexes: the ATP-hydrolytic V1 complex and the proton translocation V0 complex. The V1 complex consists of three catalytic AB heterodimers that form a heterohexamer, three peripheral stalks each consisting of EG heterodimers, one central rotor including subunits D and F, and the regulatory subunits C and H. The proton translocation complex V0 consists of the proton transport subunit a, a ring of proteolipid subunits c9c'', rotary subunit d, subunits e and f, and the accessory subunits VhaAC45 and ATP6AP2.

Subunit of the V1 complex of vacuolar(H+)-ATPase (V-ATPase), a multisubunit enzyme composed of a peripheral complex (V1) that hydrolyzes ATP and a membrane integral complex (V0) that translocates protons. V-ATPase is responsible for acidifying and maintaining the pH of intracellular compartments and in some cell types, is targeted to the plasma membrane, where it is responsible for acidifying the extracellular environment. This chain is V-type proton ATPase subunit F 2 (Vha14-2), found in Drosophila melanogaster (Fruit fly).